The following is a 990-amino-acid chain: Serine/threonine-protein phosphatase 6 regulatory ankyrin repeat subunit B (990 aa).

ANK repeat units lie at residues 7 to 36 (ADQP…DVNA), 40 to 69 (EKRT…RVNA), 73 to 102 (MWLT…DVNA), 106 to 135 (NWQT…SVNV), 139 to 168 (GGRT…NINA), 172 to 201 (KDRR…EVTC), 205 to 234 (KGYT…EIDE), 238 to 267 (YGNT…NVNQ), 271 to 301 (NGFT…DVNI), 305 to 334 (DGKS…EIDC), 338 to 367 (DGNT…DTAK), 371 to 400 (HNMF…EIDT), 404 to 433 (FGRT…DFNK), 437 to 466 (RGRT…NINE), 470 to 499 (WGRT…NAEE), 531 to 560 (EGYN…NMFE), 566 to 595 (ATKS…DLDI), 599 to 628 (KGRT…SVTV), 633 to 662 (TKRT…NPDV), 666 to 695 (KGQT…SVDA), 699 to 728 (LGCT…SILC), 732 to 761 (RGRT…SEED), 768 to 797 (QGYT…FRKF), 800 to 829 (NSFS…ASIV), 835 to 864 (KGRT…QVNA), 868 to 898 (AGKT…DLTL), 902 to 931 (DSNT…EQSL), and 938 to 967 (SLQT…CVLA).

Protein phosphatase 6 (PP6) holoenzyme is proposed to be a heterotrimeric complex formed by the catalytic subunit, a SAPS domain-containing subunit (PP6R) and an ankyrin repeat-domain containing regulatory subunit (ARS).

Putative regulatory subunit of protein phosphatase 6 (PP6) that may be involved in the recognition of phosphoprotein substrates. In Gallus gallus (Chicken), this protein is Serine/threonine-protein phosphatase 6 regulatory ankyrin repeat subunit B (ANKRD44).